Consider the following 387-residue polypeptide: WD repeat-containing protein 89 (387 aa).

WD repeat units lie at residues 21 to 65 (KEPT…VLRE), 68 to 107 (GYPG…EKPV), 112 to 156 (GYPS…QDLS), 168 to 208 (THSD…EEDA), 214 to 254 (NSIS…TDEP), and 319 to 358 (GHAA…KTFT).

This Pongo abelii (Sumatran orangutan) protein is WD repeat-containing protein 89 (WDR89).